The primary structure comprises 775 residues: Transcription activator of gluconeogenesis HCBG_00867 (775 aa).

Residues 1–70 (MTASTQNGSP…NAKDPLRPRR (70 aa)) are disordered. 2 stretches are compositionally biased toward polar residues: residues 21–41 (NQES…QSPA) and 48–60 (TAES…STAA). Positions 77-105 (CFACQRAHLTCGDERPCQRCIKRGLQDAC) form a DNA-binding region, zn(2)-C6 fungal-type. Disordered stretches follow at residues 179-248 (TQAK…PFGA), 286-351 (GAGD…NIYN), 556-592 (NLNV…AGGG), and 649-725 (QGKE…SPKQ). Polar residues predominate over residues 195 to 217 (MQDTSINPSAFQAPSPTSTPNFD). Positions 218-229 (LSSNPPNRNLSS) are enriched in low complexity. Composition is skewed to polar residues over residues 230–244 (AMTQ…QTQD), 292–323 (PSDS…TQSP), 334–351 (WNPS…NIYN), and 557–576 (LNVN…TPRN). Residues 657 to 668 (GSDGKGGGGGGD) are compositionally biased toward gly residues. Over residues 669-713 (VAATAATTSTSTSNGANSSGHANANRNNTNPKNSSPPSSSSAAAA) the composition is skewed to low complexity.

The protein belongs to the ERT1/acuK family.

Its subcellular location is the nucleus. In terms of biological role, transcription factor which regulates nonfermentable carbon utilization. Activator of gluconeogenetic genes. The protein is Transcription activator of gluconeogenesis HCBG_00867 of Ajellomyces capsulatus (strain G186AR / H82 / ATCC MYA-2454 / RMSCC 2432) (Darling's disease fungus).